A 387-amino-acid polypeptide reads, in one-letter code: Succinate--CoA ligase [ADP-forming] subunit beta (387 aa).

In terms of domain architecture, ATP-grasp spans 9–243; sequence KEILSTYGIP…YSQLDPLEIT (235 aa). Residues lysine 45, 52 to 54, glutamate 98, valine 101, and glutamate 106 each bind ATP; that span reads GRG. The Mg(2+) site is built by asparagine 198 and aspartate 212. Residues asparagine 263 and 320-322 each bind substrate; that span reads GIM.

It belongs to the succinate/malate CoA ligase beta subunit family. As to quaternary structure, heterotetramer of two alpha and two beta subunits. The cofactor is Mg(2+).

The enzyme catalyses succinate + ATP + CoA = succinyl-CoA + ADP + phosphate. The catalysed reaction is GTP + succinate + CoA = succinyl-CoA + GDP + phosphate. It functions in the pathway carbohydrate metabolism; tricarboxylic acid cycle; succinate from succinyl-CoA (ligase route): step 1/1. Succinyl-CoA synthetase functions in the citric acid cycle (TCA), coupling the hydrolysis of succinyl-CoA to the synthesis of either ATP or GTP and thus represents the only step of substrate-level phosphorylation in the TCA. The beta subunit provides nucleotide specificity of the enzyme and binds the substrate succinate, while the binding sites for coenzyme A and phosphate are found in the alpha subunit. The protein is Succinate--CoA ligase [ADP-forming] subunit beta of Trichlorobacter lovleyi (strain ATCC BAA-1151 / DSM 17278 / SZ) (Geobacter lovleyi).